Here is a 245-residue protein sequence, read N- to C-terminus: tRNA pseudouridine synthase A (245 aa).

Aspartate 52 functions as the Nucleophile in the catalytic mechanism. Residue tyrosine 111 coordinates substrate.

The protein belongs to the tRNA pseudouridine synthase TruA family. As to quaternary structure, homodimer.

The catalysed reaction is uridine(38/39/40) in tRNA = pseudouridine(38/39/40) in tRNA. Functionally, formation of pseudouridine at positions 38, 39 and 40 in the anticodon stem and loop of transfer RNAs. The protein is tRNA pseudouridine synthase A of Rickettsia rickettsii (strain Iowa).